A 237-amino-acid chain; its full sequence is 2-C-methyl-D-erythritol 4-phosphate cytidylyltransferase (237 aa).

The protein belongs to the IspD/TarI cytidylyltransferase family. IspD subfamily.

It catalyses the reaction 2-C-methyl-D-erythritol 4-phosphate + CTP + H(+) = 4-CDP-2-C-methyl-D-erythritol + diphosphate. The protein operates within isoprenoid biosynthesis; isopentenyl diphosphate biosynthesis via DXP pathway; isopentenyl diphosphate from 1-deoxy-D-xylulose 5-phosphate: step 2/6. Catalyzes the formation of 4-diphosphocytidyl-2-C-methyl-D-erythritol from CTP and 2-C-methyl-D-erythritol 4-phosphate (MEP). In Clostridioides difficile (strain 630) (Peptoclostridium difficile), this protein is 2-C-methyl-D-erythritol 4-phosphate cytidylyltransferase.